A 407-amino-acid chain; its full sequence is Odorant receptor 67a (407 aa).

The Cytoplasmic portion of the chain corresponds to 1 to 40 (MDNVAEMPEEKYVEVDDFLRLAVKFYNTLGIDPYETGRKR). The helical transmembrane segment at 41 to 61 (TIWFQIYFALNMFNMVFSFYA) threads the bilayer. Residues 62 to 79 (EVATLVDRLRDNENFLES) are Extracellular-facing. Residues 80–100 (CILLSYVSFVVMGLSKIGAVM) form a helical membrane-spanning segment. The Cytoplasmic portion of the chain corresponds to 101-144 (KKKPKMTALVRQLETCFPSPSAKVQEEYAVKSWLKRCHIYTKGF). Residues 145 to 165 (GGLFMIMYFAHALIPLFIYFI) form a helical membrane-spanning segment. Residues 166–208 (QRVLLHYPDAKQIMPFYQLEPWEFRDSWLFYPSYFHQSSAGYT) are Extracellular-facing. A helical membrane pass occupies residues 209–229 (ATCGSIAGDLMIFAVVLQVIM). Residues 230 to 278 (HYERLAKVLREFKIQAHNAPNGAKEDIRKLQSLVANHIDILRLTDLMNE) are Cytoplasmic-facing. A helical transmembrane segment spans residues 279–300 (VFGIPLLLNFIASALLVCLVGV). Residues 301-314 (QLTIALSPEYFCKQ) lie on the Extracellular side of the membrane. A helical transmembrane segment spans residues 315 to 331 (MLFLISVLLEVYLLCSF). Residues 332–378 (SQRLIDASENVGHAAYDMDWLGSDKRFKKILIFISMRSQKPVCLKAT) are Cytoplasmic-facing. A helical transmembrane segment spans residues 379-401 (VVLDLSMPTMSIFLGMSYKFFCA). Residues 402–407 (VRTMYQ) are Extracellular-facing.

It belongs to the insect chemoreceptor superfamily. Heteromeric odorant receptor channel (TC 1.A.69) family. Or49a subfamily. As to quaternary structure, interacts with Orco. Complexes exist early in the endomembrane system in olfactory sensory neurons (OSNs), coupling these complexes to the conserved ciliary trafficking pathway. As to expression, expressed in olfactory sensory neurons in the antenna.

The protein localises to the cell membrane. Functionally, odorant receptor which mediates acceptance or avoidance behavior, depending on its substrates. The odorant receptor repertoire encodes a large collection of odor stimuli that vary widely in identity, intensity, and duration. Forms a complex with Orco to form odorant-sensing units, providing sensitive and prolonged odorant signaling and calcium permeability. Involved in the behavioral responses to benzaldehyde and acetophenone. This chain is Odorant receptor 67a (Or67a), found in Drosophila melanogaster (Fruit fly).